A 302-amino-acid chain; its full sequence is tRNA pseudouridine synthase B (302 aa).

Aspartate 45 acts as the Nucleophile in catalysis.

Belongs to the pseudouridine synthase TruB family. Type 1 subfamily.

It carries out the reaction uridine(55) in tRNA = pseudouridine(55) in tRNA. In terms of biological role, responsible for synthesis of pseudouridine from uracil-55 in the psi GC loop of transfer RNAs. The protein is tRNA pseudouridine synthase B of Francisella philomiragia subsp. philomiragia (strain ATCC 25017 / CCUG 19701 / FSC 153 / O#319-036).